The sequence spans 232 residues: Ribonuclease 3 (232 aa).

The RNase III domain maps to 5-134; sequence ENLLFDRFGL…FLGALLLDKG (130 aa). E47 is a Mg(2+) binding site. D51 is an active-site residue. Residues D120 and E123 each contribute to the Mg(2+) site. The active site involves E123. One can recognise a DRBM domain in the interval 160–229; sequence DYKTKLQELL…AKNAFEKENH (70 aa).

It belongs to the ribonuclease III family. In terms of assembly, homodimer. Mg(2+) serves as cofactor.

The protein resides in the cytoplasm. It carries out the reaction Endonucleolytic cleavage to 5'-phosphomonoester.. Functionally, digests double-stranded RNA. Involved in the processing of primary rRNA transcript to yield the immediate precursors to the large and small rRNAs (23S and 16S). Processes some mRNAs, and tRNAs when they are encoded in the rRNA operon. Processes pre-crRNA and tracrRNA of type II CRISPR loci if present in the organism. The protein is Ribonuclease 3 of Streptococcus gordonii (strain Challis / ATCC 35105 / BCRC 15272 / CH1 / DL1 / V288).